Consider the following 689-residue polypeptide: Glycine--tRNA ligase beta subunit (689 aa).

Belongs to the class-II aminoacyl-tRNA synthetase family. Tetramer of two alpha and two beta subunits.

Its subcellular location is the cytoplasm. The catalysed reaction is tRNA(Gly) + glycine + ATP = glycyl-tRNA(Gly) + AMP + diphosphate. The sequence is that of Glycine--tRNA ligase beta subunit from Photobacterium profundum (strain SS9).